A 374-amino-acid polypeptide reads, in one-letter code: tRNA-specific 2-thiouridylase MnmA (374 aa).

ATP is bound by residues 16–23 (GMSGGVDS) and Met42. Positions 102–104 (NPD) are interaction with target base in tRNA. The Nucleophile role is filled by Cys107. Cys107 and Cys203 are oxidised to a cystine. Gly131 contributes to the ATP binding site. Residues 153 to 155 (KDQ) are interaction with tRNA. Cys203 serves as the catalytic Cysteine persulfide intermediate. The interval 311 to 312 (RY) is interaction with tRNA.

It belongs to the MnmA/TRMU family.

It localises to the cytoplasm. The enzyme catalyses S-sulfanyl-L-cysteinyl-[protein] + uridine(34) in tRNA + AH2 + ATP = 2-thiouridine(34) in tRNA + L-cysteinyl-[protein] + A + AMP + diphosphate + H(+). Catalyzes the 2-thiolation of uridine at the wobble position (U34) of tRNA, leading to the formation of s(2)U34. The protein is tRNA-specific 2-thiouridylase MnmA of Exiguobacterium sibiricum (strain DSM 17290 / CCUG 55495 / CIP 109462 / JCM 13490 / 255-15).